The sequence spans 66 residues: Beta-toxin ChFII.7 (66 aa).

The 66-residue stretch at 1-66 folds into the LCN-type CS-alpha/beta domain; it reads KEGYLVNHST…VWPLPKKTCN (66 aa). 4 disulfides stabilise this stretch: Cys-12–Cys-65, Cys-16–Cys-41, Cys-25–Cys-46, and Cys-29–Cys-48. Position 66 is an asparagine amide (Asn-66).

As to expression, expressed by the venom gland.

The protein localises to the secreted. Functionally, beta toxins bind voltage independently at site-4 of sodium channels (Nav) and shift the activation voltage toward more negative potentials, thereby affecting sodium channel activation CC and promoting spontaneous and repetitive firing. The chain is Beta-toxin ChFII.7 from Centruroides hirsutipalpus (Scorpion).